Consider the following 231-residue polypeptide: 7-cyano-7-deazaguanine synthase (231 aa).

ATP is bound at residue 8–18 (FSGGQDSTTCL). Zn(2+)-binding residues include Cys-188, Cys-197, Cys-200, and Cys-203.

This sequence belongs to the QueC family. Zn(2+) serves as cofactor.

It carries out the reaction 7-carboxy-7-deazaguanine + NH4(+) + ATP = 7-cyano-7-deazaguanine + ADP + phosphate + H2O + H(+). It functions in the pathway purine metabolism; 7-cyano-7-deazaguanine biosynthesis. Functionally, catalyzes the ATP-dependent conversion of 7-carboxy-7-deazaguanine (CDG) to 7-cyano-7-deazaguanine (preQ(0)). The protein is 7-cyano-7-deazaguanine synthase of Pectobacterium carotovorum subsp. carotovorum (strain PC1).